The primary structure comprises 530 residues: Bifunctional purine biosynthesis protein PurH (530 aa).

The region spanning 1–148 (MNNARPIRRA…KNHKDVTIVV (148 aa)) is the MGS-like domain.

Belongs to the PurH family.

The enzyme catalyses (6R)-10-formyltetrahydrofolate + 5-amino-1-(5-phospho-beta-D-ribosyl)imidazole-4-carboxamide = 5-formamido-1-(5-phospho-D-ribosyl)imidazole-4-carboxamide + (6S)-5,6,7,8-tetrahydrofolate. It catalyses the reaction IMP + H2O = 5-formamido-1-(5-phospho-D-ribosyl)imidazole-4-carboxamide. Its pathway is purine metabolism; IMP biosynthesis via de novo pathway; 5-formamido-1-(5-phospho-D-ribosyl)imidazole-4-carboxamide from 5-amino-1-(5-phospho-D-ribosyl)imidazole-4-carboxamide (10-formyl THF route): step 1/1. The protein operates within purine metabolism; IMP biosynthesis via de novo pathway; IMP from 5-formamido-1-(5-phospho-D-ribosyl)imidazole-4-carboxamide: step 1/1. This is Bifunctional purine biosynthesis protein PurH from Vibrio campbellii (strain ATCC BAA-1116).